Here is a 472-residue protein sequence, read N- to C-terminus: F-box protein At3g03040 (472 aa).

The F-box domain occupies 1 to 49 (MDLLSSLPDEVRCLILSFLTTKESASTSVLSKKWRNLFALVPNLDFDDS).

This is F-box protein At3g03040 from Arabidopsis thaliana (Mouse-ear cress).